A 312-amino-acid polypeptide reads, in one-letter code: Olfactory receptor 10C1 (312 aa).

Over 1 to 24 (MSANTSMVTEFLLLGFSHLADLQG) the chain is Extracellular. Asn-4 carries an N-linked (GlcNAc...) asparagine glycan. Residues 25–45 (LLFSVFLTIYLLTVAGNFLIV) form a helical membrane-spanning segment. The Cytoplasmic portion of the chain corresponds to 46–53 (VLVSTDAA). The chain crosses the membrane as a helical span at residues 54–74 (LQSPMYFFLRTLSALEIGYTS). Residues 75–98 (VTVPLLLHHLLTGRRHISRSGCAL) are Extracellular-facing. Residues Cys-96 and Cys-188 are joined by a disulfide bond. The chain crosses the membrane as a helical span at residues 99-119 (QMFFFLFFGATECCLLAAMAY). The Cytoplasmic portion of the chain corresponds to 120–138 (DRYAAICEPLRYPLLLSHR). The chain crosses the membrane as a helical span at residues 139 to 159 (VCLQLAGSAWACGVLVGLGHT). Topologically, residues 160–196 (PFIFSLPFCGPNTIPQFFCEIQPVLQLVCGDTSLNEL) are extracellular. A helical transmembrane segment spans residues 197-216 (QIILATALLILCPFGLILGS). The Cytoplasmic portion of the chain corresponds to 217-236 (YGRILVTIFRIPSVAGRRKA). The helical transmembrane segment at 237 to 257 (FSTCSSHLIMVSLFYGTALFI) threads the bilayer. Residues 258–270 (YIRPKASYDPATD) are Extracellular-facing. The chain crosses the membrane as a helical span at residues 271–291 (PLVSLFYAVVTPILNPIIYSL). The Cytoplasmic portion of the chain corresponds to 292–312 (RNTEVKAALKRTIQKTVPMEI).

It belongs to the G-protein coupled receptor 1 family.

The protein resides in the cell membrane. Odorant receptor. The polypeptide is Olfactory receptor 10C1 (OR10C1) (Homo sapiens (Human)).